Here is a 185-residue protein sequence, read N- to C-terminus: uncharacterized protein (185 aa).

Position 1 is an N-acetylmethionine (Met-1). Basic and acidic residues-rich tracts occupy residues 1–18 (MDAFSLKKDNRKKFQDKQ), 26–47 (TPSDRKYRLLNRQKEEKATTEE), and 59–71 (SNEDRYYEDPVLE). Disordered stretches follow at residues 1 to 71 (MDAF…PVLE) and 155 to 185 (DHDRAGKKISAPSTDLPEELETDQDFLDGLL). Residues 170–185 (LPEELETDQDFLDGLL) are compositionally biased toward acidic residues.

This is an uncharacterized protein from Saccharomyces cerevisiae (strain ATCC 204508 / S288c) (Baker's yeast).